A 275-amino-acid polypeptide reads, in one-letter code: Myb/SANT-like DNA-binding domain-containing protein 3 (275 aa).

The Myb-like domain occupies 13–78 (FSELEKSILL…QLKKCWENIK (66 aa)). A phosphoserine mark is found at S96 and S98. A Glycyl lysine isopeptide (Lys-Gly) (interchain with G-Cter in SUMO2) cross-link involves residue K154. The stretch at 211–247 (QLIQMNEVHVAKIQQIERECEMAEEEHRIKMEVLNKK) forms a coiled coil. Residue S274 is modified to Phosphoserine.

The protein belongs to the MSANTD3 family.

This chain is Myb/SANT-like DNA-binding domain-containing protein 3 (MSANTD3), found in Bos taurus (Bovine).